A 68-amino-acid polypeptide reads, in one-letter code: Riparin-1.5 amide (68 aa).

An N-terminal signal peptide occupies residues 1 to 15 (MKIIVVLAVLMLVSA). The propeptide occupies 16–41 (QVCLVSAAEMGHSSDNELSSRDLVKR). Cys47 and Cys53 are oxidised to a cystine. Cys53 carries the cysteine amide modification. A propeptide spanning residues 57-68 (SIESSEGANGGE) is cleaved from the precursor.

In terms of tissue distribution, expressed by the skin glands.

The protein localises to the secreted. The chain is Riparin-1.5 amide from Crinia riparia (Streambank froglet).